The following is an 88-amino-acid chain: MASQVVLSFALVVVLAVFVGQVDSCPSDCKCDYRSSQCRPANDDVHPNVCIDHYCVVMNLAKREQRPELSPGAWDDSSEEKDNEASLA.

An N-terminal signal peptide occupies residues 1-24 (MASQVVLSFALVVVLAVFVGQVDS). The disordered stretch occupies residues 66–88 (RPELSPGAWDDSSEEKDNEASLA). Residues 79–88 (EEKDNEASLA) constitute a propeptide that is removed on maturation.

The protein belongs to the scoloptoxin-XY family. Post-translationally, contains 3 disulfide bonds. In terms of tissue distribution, expressed by the venom gland.

It localises to the secreted. The sequence is that of U-scoloptoxin(XY)-Er1a from Ethmostigmus rubripes (Giant centipede).